The following is a 580-amino-acid chain: Cleavage stimulation factor subunit 2 (580 aa).

S14 is subject to Phosphoserine. Residues 16 to 94 form the RRM domain; sequence RSVFVGNIPY…RALRVDNAAS (79 aa). An interactions with CSTF3 and SYMPK region spans residues 108–248; sequence APVIESPYGE…VNGAPPMMQA (141 aa). Residue K189 forms a Glycyl lysine isopeptide (Lys-Gly) (interchain with G-Cter in SUMO2) linkage. R308 is subject to Omega-N-methylarginine. Disordered regions lie at residues 311–331 and 347–414; these read LPTNVPTPRGLLGDAPNDPRG and LGPP…RGLD. 2 stretches are compositionally biased toward basic and acidic residues: residues 363-376 and 405-414; these read PGHEGRGPPPHDMR and RGGRDPRGLD. A 1; approximate repeat occupies 413 to 417; sequence LDARG. Residues 413–472 are 12 X 5 AA tandem repeats of M-E-A-R-[AG]; that stretch reads LDARGMEARAMEARGLDARGLEARAMEARAMEARAMEARAMEARAMEARAMEARGMDTRG. Repeat copies occupy residues 418–422 and 423–427. Residues 428–432 form a 4; approximate repeat; it reads LDARG. Residues 433–437 form a 5; approximate repeat; sequence LEARA. 6 consecutive repeat copies span residues 438–442, 443–447, 448–452, 453–457, 458–462, and 463–467. The stretch at 468 to 472 is one 12; approximate repeat; it reads MDTRG. Omega-N-methylarginine occurs at positions 471 and 478. The segment at 512–536 is disordered; the sequence is MQGASMQGGSQPGGFSPGQSQVTPQ. Positions 517–580 are interaction with RPO2TC1; sequence MQGGSQPGGF…EQIQKSTGAP (64 aa). S521 and S527 each carry phosphoserine.

As to quaternary structure, the CSTF complex is composed of CSTF1 (50 kDa subunit), CSTF2 (64 kDa subunit) and CSTF3 (77 kDa subunit). CSTF2 directly interacts with CSTF3, SYMPK and RPO2TC1. Interacts with HSF1 in heat-stressed cells. Interacts with CPSF2, CPSF3 and FIP1L1. Interacts with DDX1. As to expression, expressed in most somatic cell types (at protein level). Highly expressed in testis, except in meiotic spermatocytes.

Its subcellular location is the nucleus. One of the multiple factors required for polyadenylation and 3'-end cleavage of mammalian pre-mRNAs. This subunit is directly involved in the binding to pre-mRNAs. In Mus musculus (Mouse), this protein is Cleavage stimulation factor subunit 2 (Cstf2).